The following is a 72-amino-acid chain: DNA-directed RNA polymerase subunit omega (72 aa).

This sequence belongs to the RNA polymerase subunit omega family. The RNAP catalytic core consists of 2 alpha, 1 beta, 1 beta' and 1 omega subunit. When a sigma factor is associated with the core the holoenzyme is formed, which can initiate transcription.

It carries out the reaction RNA(n) + a ribonucleoside 5'-triphosphate = RNA(n+1) + diphosphate. Promotes RNA polymerase assembly. Latches the N- and C-terminal regions of the beta' subunit thereby facilitating its interaction with the beta and alpha subunits. The sequence is that of DNA-directed RNA polymerase subunit omega from Clostridium botulinum (strain Loch Maree / Type A3).